The following is a 167-amino-acid chain: MSNAKNTSAASPARKGHSHHDPASDEFRKEDFPFYWLARVHGRYTQNMERLLKKIDLDVPRWRVLWILNENGESSISEISTHAIAKLSTITKIVYRMKEDGLVDTAPSPEDGRVTQVRITEVGLQNIERMQEVTRELFQRSFKGLTEAQVQRLNRMLEVVFHNLETL.

The segment covering 1–10 has biased composition (polar residues); the sequence is MSNAKNTSAA. Residues 1–25 are disordered; it reads MSNAKNTSAASPARKGHSHHDPASD. The 133-residue stretch at 30 to 162 folds into the HTH marR-type domain; that stretch reads EDFPFYWLAR…LNRMLEVVFH (133 aa). The H-T-H motif DNA-binding region spans 76-99; sequence ISEISTHAIAKLSTITKIVYRMKE.

Its activity is regulated as follows. Exposure to indole-3-acetic acid (IAA) probably relieves the repressor activity. Probably acts as a repressor of iacA expression. The sequence is that of HTH-type transcriptional repressor IacR from Pseudomonas putida (Arthrobacter siderocapsulatus).